Consider the following 379-residue polypeptide: Glucose-insensitive transcription protein 7 (379 aa).

Residues 181–272 form the CS domain; it reads SNRIRYDWSQ…VSEIKWEALV (92 aa). The region spanning 292–379 is the SGS domain; that stretch reads ASGNTKNKAK…PPQGMEPKKF (88 aa). The segment at 345-379 is disordered; that stretch reads SYTESNGTALSTNWKDVKSKTFETKPPQGMEPKKF. Residues 346 to 358 are compositionally biased toward polar residues; it reads YTESNGTALSTNW.

Functionally, involved in cyclic AMP (cAMP) pathway, possibly by participating in the assembly or the conformational activation of specific multiprotein complexes. In Schizosaccharomyces pombe (strain 972 / ATCC 24843) (Fission yeast), this protein is Glucose-insensitive transcription protein 7 (git7).